The sequence spans 398 residues: Growth-regulating factor 3 (398 aa).

Positions 1-17 are enriched in low complexity; the sequence is MDLQLKQWRSQQQQQHQ. A disordered region spans residues 1 to 32; it reads MDLQLKQWRSQQQQQHQTESEEQPSAAKIPKH. One can recognise a QLQ domain in the interval 76–111; it reads FFSWAQWQELELQALIYRYMLAGAAVPQELLLPIKK. The WRC domain occupies 144 to 188; sequence DPEPGRCRRTDGKKWRCSRDVFAGHKYCERHMHRGRNRSRKPVET. 2 consecutive short sequence motifs (bipartite nuclear localization signal) follow at residues 149 to 159 and 177 to 184; these read RCRRTDGKKWR and RGRNRSRK. Composition is skewed to polar residues over residues 299-350 and 383-398; these read SLQE…RDQQ and PTSV…QAFH. Residues 299–398 form a disordered region; it reads SLQEADNSSS…QLGVSTQAFH (100 aa).

It belongs to the GRF family. As to expression, strongly expressed in actively growing and developing tissues, such as roots, upper stems, and shoot tips containing the shoot apical meristem (SAM) and flower buds. Also expressed in mature flowers, but weakly expressed in mature stems and leaves.

Its subcellular location is the nucleus. Its function is as follows. Transcription activator that plays a role in the regulation of cell expansion in leaf and cotyledons tissues. Component of a network formed by miR396, the GRFs and their interacting factors (GIFs) acting in the regulation of meristem function, at least partially through the control of cell proliferation. microRNA396-GRF1/GRF3 regulatory module acts as a developmental regulator in the reprogramming of root cells during cyst nematode infection, leading to the formation of the syncytium. The chain is Growth-regulating factor 3 (GRF3) from Arabidopsis thaliana (Mouse-ear cress).